The chain runs to 309 residues: Porphobilinogen deaminase (309 aa).

Cysteine 244 is modified (S-(dipyrrolylmethanemethyl)cysteine).

It belongs to the HMBS family. In terms of assembly, monomer. Dipyrromethane is required as a cofactor.

The catalysed reaction is 4 porphobilinogen + H2O = hydroxymethylbilane + 4 NH4(+). It functions in the pathway porphyrin-containing compound metabolism; protoporphyrin-IX biosynthesis; coproporphyrinogen-III from 5-aminolevulinate: step 2/4. Its function is as follows. Tetrapolymerization of the monopyrrole PBG into the hydroxymethylbilane pre-uroporphyrinogen in several discrete steps. The chain is Porphobilinogen deaminase from Listeria welshimeri serovar 6b (strain ATCC 35897 / DSM 20650 / CCUG 15529 / CIP 8149 / NCTC 11857 / SLCC 5334 / V8).